Consider the following 124-residue polypeptide: Small ribosomal subunit protein uS13 (124 aa).

Residues 94–117 (NLPVRGQRTRTNARTRKGPRKTVA) are compositionally biased toward basic residues. The tract at residues 94-124 (NLPVRGQRTRTNARTRKGPRKTVANKKIESK) is disordered.

This sequence belongs to the universal ribosomal protein uS13 family. Part of the 30S ribosomal subunit. Forms a loose heterodimer with protein S19. Forms two bridges to the 50S subunit in the 70S ribosome.

In terms of biological role, located at the top of the head of the 30S subunit, it contacts several helices of the 16S rRNA. In the 70S ribosome it contacts the 23S rRNA (bridge B1a) and protein L5 of the 50S subunit (bridge B1b), connecting the 2 subunits; these bridges are implicated in subunit movement. Contacts the tRNAs in the A and P-sites. The polypeptide is Small ribosomal subunit protein uS13 (Mycoplasma pneumoniae (strain ATCC 29342 / M129 / Subtype 1) (Mycoplasmoides pneumoniae)).